The primary structure comprises 367 residues: 2-aminoethylphosphonate--pyruvate transaminase (367 aa).

Lys-193 carries the post-translational modification N6-(pyridoxal phosphate)lysine.

The protein belongs to the class-V pyridoxal-phosphate-dependent aminotransferase family. PhnW subfamily. In terms of assembly, homodimer. Requires pyridoxal 5'-phosphate as cofactor.

It catalyses the reaction (2-aminoethyl)phosphonate + pyruvate = phosphonoacetaldehyde + L-alanine. Functionally, involved in phosphonate degradation. The protein is 2-aminoethylphosphonate--pyruvate transaminase of Vibrio vulnificus (strain YJ016).